The chain runs to 320 residues: Cytochrome c biogenesis protein CcsA (320 aa).

7 helical membrane passes run 13-33, 46-66, 73-93, 147-167, 226-246, 259-274, and 289-309; these read ISFS…FLLV, GMIV…IYSG, LYES…VSYL, MVLG…LLVI, IISL…VWAN, ETWA…IYFH, and VASM…LLGI.

It belongs to the CcmF/CycK/Ccl1/NrfE/CcsA family. As to quaternary structure, may interact with Ccs1.

The protein localises to the plastid. Its subcellular location is the chloroplast thylakoid membrane. Functionally, required during biogenesis of c-type cytochromes (cytochrome c6 and cytochrome f) at the step of heme attachment. This is Cytochrome c biogenesis protein CcsA from Gossypium barbadense (Sea Island cotton).